The primary structure comprises 274 residues: Dermonecrotic toxin SdSicTox-betaIIB2i (274 aa).

His5 is an active-site residue. 2 residues coordinate Mg(2+): Glu25 and Asp27. His41 functions as the Nucleophile in the catalytic mechanism. Disulfide bonds link Cys45/Cys51 and Cys47/Cys190. Asp85 contributes to the Mg(2+) binding site.

Belongs to the arthropod phospholipase D family. Class II subfamily. It depends on Mg(2+) as a cofactor. In terms of tissue distribution, expressed by the venom gland.

Its subcellular location is the secreted. The enzyme catalyses an N-(acyl)-sphingosylphosphocholine = an N-(acyl)-sphingosyl-1,3-cyclic phosphate + choline. The catalysed reaction is an N-(acyl)-sphingosylphosphoethanolamine = an N-(acyl)-sphingosyl-1,3-cyclic phosphate + ethanolamine. It catalyses the reaction a 1-acyl-sn-glycero-3-phosphocholine = a 1-acyl-sn-glycero-2,3-cyclic phosphate + choline. It carries out the reaction a 1-acyl-sn-glycero-3-phosphoethanolamine = a 1-acyl-sn-glycero-2,3-cyclic phosphate + ethanolamine. In terms of biological role, dermonecrotic toxins cleave the phosphodiester linkage between the phosphate and headgroup of certain phospholipids (sphingolipid and lysolipid substrates), forming an alcohol (often choline) and a cyclic phosphate. This toxin acts on sphingomyelin (SM). It may also act on ceramide phosphoethanolamine (CPE), lysophosphatidylcholine (LPC) and lysophosphatidylethanolamine (LPE), but not on lysophosphatidylserine (LPS), and lysophosphatidylglycerol (LPG). It acts by transphosphatidylation, releasing exclusively cyclic phosphate products as second products. Induces dermonecrosis, hemolysis, increased vascular permeability, edema, inflammatory response, and platelet aggregation. The polypeptide is Dermonecrotic toxin SdSicTox-betaIIB2i (Sicarius cf. damarensis (strain GJB-2008) (Six-eyed sand spider)).